The following is a 485-amino-acid chain: WAS/WASL-interacting protein family member 3 (485 aa).

Residues Met-1 to Pro-30 are compositionally biased toward pro residues. The interval Met-1 to Arg-485 is disordered. Short sequence motifs (profilin-binding motif) lie at residues Val-3 to Pro-8, Leu-11 to Pro-16, and Ala-20 to Pro-25. The 18-residue stretch at Gly-45–Val-62 folds into the WH2 domain. Arg-46 carries the asymmetric dimethylarginine modification. Residues Arg-58–Lys-61 carry the RLRK motif. Polar residues predominate over residues Thr-63 to Gly-78. At Ser-150 the chain carries Phosphoserine. Composition is skewed to pro residues over residues Pro-165–Ser-200 and Val-207–Pro-243. Residue Ser-208 is modified to Phosphoserine. A compositionally biased stretch (low complexity) spans Ala-244 to Leu-259. 2 stretches are compositionally biased toward pro residues: residues His-260–Gly-275 and Pro-293–Pro-312. Residue Ser-394 is modified to Phosphoserine. Polar residues predominate over residues Thr-396–Gly-407. Residues Val-417–Pro-441 are compositionally biased toward basic and acidic residues. The WASP-binding motif signature appears at Thr-426–Val-450. The segment covering Arg-475–Arg-485 has biased composition (polar residues).

It belongs to the verprolin family. Isoform 1 interacts with WASL (via WH1 domain), and monomeric and filamentous actin. As to expression, detected mainly in brain and at lower levels in heart and lung (at protein level). Also detected in testis but not in kidney, liver or spleen.

It localises to the cytoplasm. Functionally, may have a role in spermatogenesis. May be a regulator of cytoskeletal organization. This is WAS/WASL-interacting protein family member 3 (Wipf3) from Rattus norvegicus (Rat).